Consider the following 164-residue polypeptide: CB1 cannabinoid receptor-interacting protein 1 (164 aa).

This sequence belongs to the CNRIP family. In terms of assembly, interacts with the cannabinoid receptor CNR1 (via C-terminus). Does not interact with cannabinoid receptor CNR2.

Its function is as follows. Suppresses cannabinoid receptor CNR1-mediated tonic inhibition of voltage-gated calcium channels. In Rattus norvegicus (Rat), this protein is CB1 cannabinoid receptor-interacting protein 1 (Cnrip1).